The chain runs to 170 residues: NADH-quinone oxidoreductase subunit B (170 aa).

Residues cysteine 46, cysteine 47, cysteine 111, and cysteine 141 each coordinate [4Fe-4S] cluster.

Belongs to the complex I 20 kDa subunit family. In terms of assembly, NDH-1 is composed of 14 different subunits. Subunits NuoB, C, D, E, F, and G constitute the peripheral sector of the complex. It depends on [4Fe-4S] cluster as a cofactor.

It localises to the cell membrane. The enzyme catalyses a quinone + NADH + 5 H(+)(in) = a quinol + NAD(+) + 4 H(+)(out). In terms of biological role, NDH-1 shuttles electrons from NADH, via FMN and iron-sulfur (Fe-S) centers, to quinones in the respiratory chain. The immediate electron acceptor for the enzyme in this species is believed to be a menaquinone. Couples the redox reaction to proton translocation (for every two electrons transferred, four hydrogen ions are translocated across the cytoplasmic membrane), and thus conserves the redox energy in a proton gradient. The protein is NADH-quinone oxidoreductase subunit B of Geobacillus sp. (strain WCH70).